A 452-amino-acid chain; its full sequence is UDP-N-acetylmuramate--L-alanine ligase (452 aa).

110 to 116 contacts ATP; sequence GTHGKTT.

This sequence belongs to the MurCDEF family.

It localises to the cytoplasm. It catalyses the reaction UDP-N-acetyl-alpha-D-muramate + L-alanine + ATP = UDP-N-acetyl-alpha-D-muramoyl-L-alanine + ADP + phosphate + H(+). It participates in cell wall biogenesis; peptidoglycan biosynthesis. Its function is as follows. Cell wall formation. This is UDP-N-acetylmuramate--L-alanine ligase from Francisella philomiragia subsp. philomiragia (strain ATCC 25017 / CCUG 19701 / FSC 153 / O#319-036).